Reading from the N-terminus, the 115-residue chain is Large ribosomal subunit protein bL20 (115 aa).

The protein belongs to the bacterial ribosomal protein bL20 family.

Binds directly to 23S ribosomal RNA and is necessary for the in vitro assembly process of the 50S ribosomal subunit. It is not involved in the protein synthesizing functions of that subunit. This is Large ribosomal subunit protein bL20 (rplT) from Borreliella burgdorferi (strain ATCC 35210 / DSM 4680 / CIP 102532 / B31) (Borrelia burgdorferi).